The chain runs to 173 residues: Protein TraS (173 aa).

It localises to the cell inner membrane. Involved in surface exclusion. This Escherichia coli (strain K12) protein is Protein TraS (traS).